A 288-amino-acid polypeptide reads, in one-letter code: MSSSMWYIMQSIQSKYSLSERLIRTIAAIRSFPHDNVEDLIRGGADVNCTHGTLKPLHCACMVSDADCVELLLEKGAEVNALDGYNRTALHYAAEKDEACVEVLLEYGANPNALDGNRDTPLHWAAFKNNAECVRALLESGASVNALDYNNDTPLSWAAMKGNLESVSILLDYGAEVRVINLKGQTPISRLVALLVRGLGTEKEDSCFELLHRAVGHFELRKNGTMPREVAKDQQLCEKLTVLCSAPGTLKTLSRYAVRRSLGLQYLPDAVKGLPLPASLKEYLLLIE.

S17 bears the Phosphoserine mark. ANK repeat units follow at residues G52–A81, Y85–A113, N117–A146, and N150–V179. Positions Q235–E288 constitute an SOCS box domain.

This sequence belongs to the ankyrin SOCS box (ASB) family. Interacts with TBK1; this interaction promotes TBK1 proteasomal degradation. In terms of processing, phosphorylated by TBK1.

It localises to the cytoplasm. It functions in the pathway protein modification; protein ubiquitination. Functionally, may be a substrate-recognition component of a SCF-like ECS (Elongin-Cullin-SOCS-box protein) E3 ubiquitin-protein ligase complex which mediates the ubiquitination and subsequent proteasomal degradation of target proteins. Inhibits IFN-beta production through the IRF3 signaling pathway by targeting TBK1 via 'Lys-48'-linked ubiquitination, leading to its proteasomal degradation. In Bos taurus (Bovine), this protein is Ankyrin repeat and SOCS box protein 8 (ASB8).